Here is a 179-residue protein sequence, read N- to C-terminus: Adenine phosphoribosyltransferase (179 aa).

Belongs to the purine/pyrimidine phosphoribosyltransferase family. Homodimer.

The protein resides in the cytoplasm. It catalyses the reaction AMP + diphosphate = 5-phospho-alpha-D-ribose 1-diphosphate + adenine. It functions in the pathway purine metabolism; AMP biosynthesis via salvage pathway; AMP from adenine: step 1/1. Functionally, catalyzes a salvage reaction resulting in the formation of AMP, that is energically less costly than de novo synthesis. The sequence is that of Adenine phosphoribosyltransferase from Haemophilus ducreyi (strain 35000HP / ATCC 700724).